The primary structure comprises 513 residues: Na(+)/H(+) antiporter NhaB (513 aa).

11 helical membrane-spanning segments follow: residues 21–41 (ITIVLFLIINPIIFFFISPFI), 88–108 (IIANFEVILLLIFMVAGIYFM), 119–139 (LLLSIRSKMVLSLAFCLSAAF), 143–163 (FLDALTVVAVIISVGMGFYGV), 208–228 (VGTALGGVMTMVGEPQNLIIA), 247–267 (LPVLICGLVTCFLVEKFGVFG), 303–323 (ALIGIWLVVGLAFHLAAVGII), 357–377 (LVVFFSVVAVIIDQHLFAPII), 389–409 (LALFYIFNGLLSAISDNVFVA), 447–467 (ATPNGQAAFLFLLTSSLAPLI), and 477–497 (MALPYTIVLSCIGLLAVEYIL).

Belongs to the NhaB Na(+)/H(+) (TC 2.A.34) antiporter family.

Its subcellular location is the cell inner membrane. The catalysed reaction is 2 Na(+)(in) + 3 H(+)(out) = 2 Na(+)(out) + 3 H(+)(in). Functionally, na(+)/H(+) antiporter that extrudes sodium in exchange for external protons. This Pasteurella multocida (strain Pm70) protein is Na(+)/H(+) antiporter NhaB.